The following is a 35-amino-acid chain: Putative gastric cancer-related gene 224 protein (35 aa).

As to expression, expressed in gastric mucosa.

The polypeptide is Putative gastric cancer-related gene 224 protein (GCRG224) (Homo sapiens (Human)).